The chain runs to 1939 residues: Myosin-6 (1939 aa).

The region spanning 32-81 (DIRTECFVPDDKEEFVKAKILSREGGKVIAETENGKTVTVKEDQVLQQNP) is the Myosin N-terminal SH3-like domain. Positions 85–780 (DKIEDMAMLT…LLGLLEEMRD (696 aa)) constitute a Myosin motor domain. N6,N6,N6-trimethyllysine is present on Lys-129. 178–185 (GESGAGKT) is a binding site for ATP. The residue at position 379 (Thr-379) is a Phosphothreonine. Ser-417 is modified (phosphoserine). Actin-binding regions lie at residues 657–679 (LNKL…IPNE) and 759–773 (KFGH…GLLG). One can recognise an IQ domain in the interval 783 to 812 (LSRIITRMQAQARGQLMRIEFKKIVERRDA). A coiled-coil region spans residues 842-1939 (LKSAETEKEM…GAKQKMHDEE (1098 aa)). Ser-1139 carries the phosphoserine modification. Position 1261 is a phosphotyrosine (Tyr-1261). A Phosphoserine modification is found at Ser-1271. Phosphothreonine is present on residues Thr-1277 and Thr-1284. At Ser-1309 the chain carries Phosphoserine. Tyr-1310 bears the Phosphotyrosine mark. At Thr-1311 the chain carries Phosphothreonine. Ser-1512 is modified (phosphoserine). Thr-1515 carries the phosphothreonine modification. 2 stretches are compositionally biased toward basic and acidic residues: residues 1826 to 1837 (GELEAEQKRNAE) and 1925 to 1939 (KSRD…HDEE). Disordered stretches follow at residues 1826–1849 (GELE…ERRI) and 1909–1939 (EERA…HDEE).

This sequence belongs to the TRAFAC class myosin-kinesin ATPase superfamily. Myosin family. As to quaternary structure, muscle myosin is a hexameric protein that consists of 2 heavy chain subunits (MHC), 2 alkali light chain subunits (MLC) and 2 regulatory light chain subunits (MLC-2).

Its subcellular location is the cytoplasm. It localises to the myofibril. Muscle contraction. The polypeptide is Myosin-6 (MYH6) (Homo sapiens (Human)).